The chain runs to 191 residues: Protein LURP-one-related 6 (191 aa).

This sequence belongs to the LOR family.

Might be related to the phospholipid scramblase and tubby-like superfamily of membrane tethered transcription factors. This chain is Protein LURP-one-related 6, found in Arabidopsis thaliana (Mouse-ear cress).